A 610-amino-acid polypeptide reads, in one-letter code: Glutamine--fructose-6-phosphate aminotransferase [isomerizing] (610 aa).

The active-site Nucleophile; for GATase activity is C2. The Glutamine amidotransferase type-2 domain occupies 2 to 219 (CGIVGAVAQR…EGDVAEITRR (218 aa)). SIS domains lie at 287 to 427 (ADEL…LRGM) and 459 to 600 (LAEG…VDQP). K605 (for Fru-6P isomerization activity) is an active-site residue.

As to quaternary structure, homodimer.

It localises to the cytoplasm. It carries out the reaction D-fructose 6-phosphate + L-glutamine = D-glucosamine 6-phosphate + L-glutamate. In terms of biological role, catalyzes the first step in hexosamine metabolism, converting fructose-6P into glucosamine-6P using glutamine as a nitrogen source. The sequence is that of Glutamine--fructose-6-phosphate aminotransferase [isomerizing] from Pectobacterium atrosepticum (strain SCRI 1043 / ATCC BAA-672) (Erwinia carotovora subsp. atroseptica).